Reading from the N-terminus, the 250-residue chain is MIRQIQKRPAGSNANPLFLFHDASGTISNYLALGLLGRDVYAIADSRIKAKGDESLQDMSRRYYALIKSTVAEGTILLGGWSLGGMTALQVAWIFSRDPKVNVAGVLMIDSPFPDYRHALSLALESPPSEDGPASTRSDIEKAMLQTVTMLHKWKIPVWRREPQPHTVMLCAGNDVDSDHVALSLVDQFRDSPTLGWNERAGPSVVNESYPIQGHHFSIFDPRNIDSVTKTIVTVTAAMEMMAPEDDEDY.

Belongs to the AMT4 thioesterase family.

Its pathway is secondary metabolite biosynthesis. Its function is as follows. Thioesterase; part of the gene cluster that mediates the biosynthesis of the lipopeptides W493 A and B. W493 A and B consist of six amino acid residues D-allo-thr, L-Ala, D-Ala, L-Gln, D-Tyr, and L-Val/L-Ile linked to a 3-hydroxy-4-methyltetradecanoic acid polyketide chain. The biosynthesis starts with formation of the linear polyketide chain by the highly reducing polyketide synthase PKS40. The gene cluster contains a putative acyl-CoA ligase (FPSE_09184) for formation of a CoA thioester polyketide. The thiol bond could be hydrolyzed by the putative thioesterase (FPSE_09186) and then accepted by the first T domain in module 1 of NRPS32. The second T domain is responsible for accepting a threonine, which is adenylated by the A domain and epimerized to the D-allo-threonine formed by the E domain. The five successive modules incorporate Ala, Ala, Gln, Tyr, and Val/Ile into the final product, which is released by cyclization. The protein is Thioesterase FPSE_09186 of Fusarium pseudograminearum (strain CS3096) (Wheat and barley crown-rot fungus).